Consider the following 567-residue polypeptide: Oxygen-dependent choline dehydrogenase (567 aa).

An FAD-binding site is contributed by aspartate 6–glutamate 35. Histidine 475 serves as the catalytic Proton acceptor.

This sequence belongs to the GMC oxidoreductase family. It depends on FAD as a cofactor.

The catalysed reaction is choline + A = betaine aldehyde + AH2. It catalyses the reaction betaine aldehyde + NAD(+) + H2O = glycine betaine + NADH + 2 H(+). Its pathway is amine and polyamine biosynthesis; betaine biosynthesis via choline pathway; betaine aldehyde from choline (cytochrome c reductase route): step 1/1. Functionally, involved in the biosynthesis of the osmoprotectant glycine betaine. Catalyzes the oxidation of choline to betaine aldehyde and betaine aldehyde to glycine betaine at the same rate. The chain is Oxygen-dependent choline dehydrogenase from Pseudomonas fluorescens (strain Pf0-1).